The chain runs to 214 residues: Small ribosomal subunit protein uS3c (214 aa).

Residues 39–111 (IRTYLNKLAK…QITINVVEVE (73 aa)) enclose the KH type-2 domain.

Belongs to the universal ribosomal protein uS3 family. As to quaternary structure, part of the 30S ribosomal subunit.

The protein resides in the plastid. The protein localises to the chloroplast. This chain is Small ribosomal subunit protein uS3c (rps3), found in Thalassiosira pseudonana (Marine diatom).